Consider the following 130-residue polypeptide: Small ribosomal subunit protein uS9 (130 aa).

Belongs to the universal ribosomal protein uS9 family.

The sequence is that of Small ribosomal subunit protein uS9 (rpsI) from Geobacillus stearothermophilus (Bacillus stearothermophilus).